The primary structure comprises 170 residues: Small ribosomal subunit protein uS9 (170 aa).

It belongs to the universal ribosomal protein uS9 family.

In Rhodococcus opacus (strain B4), this protein is Small ribosomal subunit protein uS9.